The chain runs to 88 residues: Small ribosomal subunit protein uS17 (88 aa).

It belongs to the universal ribosomal protein uS17 family. Part of the 30S ribosomal subunit.

Its function is as follows. One of the primary rRNA binding proteins, it binds specifically to the 5'-end of 16S ribosomal RNA. This Mycoplasmopsis pulmonis (strain UAB CTIP) (Mycoplasma pulmonis) protein is Small ribosomal subunit protein uS17.